A 77-amino-acid polypeptide reads, in one-letter code: Conotoxin King-Kong 1 (77 aa).

A signal peptide spans 1–22 (MKLTCMMIVAVLFLTAWTFATA). A propeptide spanning residues 23–49 (DDSSNGLENLFSKAHHEMKNPEASKLN) is cleaved from the precursor. Cystine bridges form between C52–C67, C59–C71, and C66–C76. M61 carries the post-translational modification Methionine sulfoxide; partial.

Belongs to the conotoxin O1 superfamily. As to expression, expressed by the venom duct.

Its subcellular location is the secreted. This chain is Conotoxin King-Kong 1, found in Conus textile (Cloth-of-gold cone).